The following is a 110-amino-acid chain: UPF0122 protein YlxM (110 aa).

The protein belongs to the UPF0122 family.

In terms of biological role, might take part in the signal recognition particle (SRP) pathway. This is inferred from the conservation of its genetic proximity to ftsY/ffh. May be a regulatory protein. The protein is UPF0122 protein YlxM (ylxM) of Bacillus subtilis (strain 168).